Reading from the N-terminus, the 665-residue chain is Translation factor guf1, mitochondrial (665 aa).

The N-terminal 40 residues, 1–40, are a transit peptide targeting the mitochondrion; that stretch reads MRGCLQLARWLSAAPTRPAASHWPGLCAAPRFFSHSAILR. The 181-residue stretch at 67–247 folds into the tr-type G domain; it reads ERYRNFCIVA…TVVDKIPAPI (181 aa). Residues 76 to 83, 140 to 144, and 194 to 197 each bind GTP; these read AHVDHGKS, DTPGH, and NKVD.

The protein belongs to the TRAFAC class translation factor GTPase superfamily. Classic translation factor GTPase family. LepA subfamily.

The protein resides in the mitochondrion inner membrane. The catalysed reaction is GTP + H2O = GDP + phosphate + H(+). Promotes mitochondrial protein synthesis. May act as a fidelity factor of the translation reaction, by catalyzing a one-codon backward translocation of tRNAs on improperly translocated ribosomes. Binds to mitochondrial ribosomes in a GTP-dependent manner. The sequence is that of Translation factor guf1, mitochondrial (guf1) from Aspergillus terreus (strain NIH 2624 / FGSC A1156).